The chain runs to 190 residues: ATP synthase subunit delta (190 aa).

The protein belongs to the ATPase delta chain family. F-type ATPases have 2 components, F(1) - the catalytic core - and F(0) - the membrane proton channel. F(1) has five subunits: alpha(3), beta(3), gamma(1), delta(1), epsilon(1). F(0) has three main subunits: a(1), b(2) and c(10-14). The alpha and beta chains form an alternating ring which encloses part of the gamma chain. F(1) is attached to F(0) by a central stalk formed by the gamma and epsilon chains, while a peripheral stalk is formed by the delta and b chains.

The protein localises to the cell inner membrane. Functionally, f(1)F(0) ATP synthase produces ATP from ADP in the presence of a proton or sodium gradient. F-type ATPases consist of two structural domains, F(1) containing the extramembraneous catalytic core and F(0) containing the membrane proton channel, linked together by a central stalk and a peripheral stalk. During catalysis, ATP synthesis in the catalytic domain of F(1) is coupled via a rotary mechanism of the central stalk subunits to proton translocation. Its function is as follows. This protein is part of the stalk that links CF(0) to CF(1). It either transmits conformational changes from CF(0) to CF(1) or is implicated in proton conduction. In Anaplasma marginale (strain Florida), this protein is ATP synthase subunit delta.